We begin with the raw amino-acid sequence, 121 residues long: Small ribosomal subunit protein uS13 (121 aa).

The segment at 95–121 (LPVRGQNTKNNARTRKGKAVAIAGKKK) is disordered. Over residues 106–121 (ARTRKGKAVAIAGKKK) the composition is skewed to basic residues.

It belongs to the universal ribosomal protein uS13 family. In terms of assembly, part of the 30S ribosomal subunit. Forms a loose heterodimer with protein S19. Forms two bridges to the 50S subunit in the 70S ribosome.

Located at the top of the head of the 30S subunit, it contacts several helices of the 16S rRNA. In the 70S ribosome it contacts the 23S rRNA (bridge B1a) and protein L5 of the 50S subunit (bridge B1b), connecting the 2 subunits; these bridges are implicated in subunit movement. Contacts the tRNAs in the A and P-sites. This is Small ribosomal subunit protein uS13 from Streptococcus equi subsp. zooepidemicus (strain H70).